A 471-amino-acid chain; its full sequence is Heat shock 70 kDa protein 13 (471 aa).

A signal peptide spans 1 to 22; that stretch reads MAREMTILGSAVLTLLLAGYLA. Positions 315–341 are enriched in basic and acidic residues; it reads EQDRKEPHSSDTELPKDKLSSADDHRV. The interval 315-352 is disordered; it reads EQDRKEPHSSDTELPKDKLSSADDHRVNSGFGRGLSDK.

The protein belongs to the heat shock protein 70 family. As to quaternary structure, binds UBQLN2. As to expression, constitutively expressed in all tissues.

It localises to the microsome. The protein localises to the endoplasmic reticulum. Its function is as follows. Has peptide-independent ATPase activity. This chain is Heat shock 70 kDa protein 13 (HSPA13), found in Homo sapiens (Human).